Reading from the N-terminus, the 63-residue chain is Large ribosomal subunit protein eL29 (63 aa).

The segment covering 1 to 26 (MAKSKNHTAHNQTRKAHRNGIKKPKT) has biased composition (basic residues). Residues 1 to 35 (MAKSKNHTAHNQTRKAHRNGIKKPKTYKYPSLKGV) are disordered.

This sequence belongs to the eukaryotic ribosomal protein eL29 family. Component of the large ribosomal subunit. Mature ribosomes consist of a small (40S) and a large (60S) subunit. The 40S subunit contains about 32 different proteins and 1 molecule of RNA (18S). The 60S subunit contains 45 different proteins and 3 molecules of RNA (25S, 5.8S and 5S).

The protein resides in the cytoplasm. In terms of biological role, component of the ribosome, a large ribonucleoprotein complex responsible for the synthesis of proteins in the cell. The small ribosomal subunit (SSU) binds messenger RNAs (mRNAs) and translates the encoded message by selecting cognate aminoacyl-transfer RNA (tRNA) molecules. The large subunit (LSU) contains the ribosomal catalytic site termed the peptidyl transferase center (PTC), which catalyzes the formation of peptide bonds, thereby polymerizing the amino acids delivered by tRNAs into a polypeptide chain. The nascent polypeptides leave the ribosome through a tunnel in the LSU and interact with protein factors that function in enzymatic processing, targeting, and the membrane insertion of nascent chains at the exit of the ribosomal tunnel. The protein is Large ribosomal subunit protein eL29 of Candida albicans (strain SC5314 / ATCC MYA-2876) (Yeast).